The chain runs to 602 residues: Fructan 1-exohydrolase (602 aa).

Positions 1-19 are cleaved as a signal peptide; sequence MAQAWAFLLLPVLLLSSYA. Asp81 is an active-site residue. Asn174, Asn242, and Asn254 each carry an N-linked (GlcNAc...) asparagine glycan. A disulfide bridge links Cys452 with Cys498.

The protein belongs to the glycosyl hydrolase 32 family. As to expression, detected in leaves, with maximum levels at the leaf tip.

It carries out the reaction Hydrolysis of terminal, non-reducing (2-&gt;1)-linked beta-D-fructofuranose residues in fructans.. With respect to regulation, inhibited by sucrose. Its function is as follows. Hydrolyzes inulin-type beta-(2,1)-fructans. Has low activity against beta-(2,6)-linked fructans. May play a role as a beta-(2,1)-trimmer during graminan biosynthesis. The sequence is that of Fructan 1-exohydrolase from Bromus pictus (Patagonian grass).